A 599-amino-acid chain; its full sequence is Tail knob protein gp9 (599 aa).

It belongs to the picovirinae distal tube protein family. As to quaternary structure, homohexamer; forms a hexameric tube structure with six flexible hydrophobic loops.

The protein localises to the virion. Distal (knob) tail protein that plugs the end of the tube before DNA ejection and forms a channel perforating the host membrane during ejection. This chain is Tail knob protein gp9 (9), found in Bacillus phage PZA (Bacteriophage PZA).